The following is a 95-amino-acid chain: Parvalbumin alpha (95 aa).

Phosphoserine is present on Ser-19. EF-hand domains follow at residues 34–69 and 73–95; these read KNRE…FSAD and LSDT…KIGA. Residues Asp-47, Asp-49, Ser-51, Phe-53, Glu-55, Glu-58, Asp-86, Asp-88, Asp-90, and Lys-92 each coordinate Ca(2+).

The protein belongs to the parvalbumin family.

Its function is as follows. In muscle, parvalbumin is thought to be involved in relaxation after contraction. It binds two calcium ions. This Cavia porcellus (Guinea pig) protein is Parvalbumin alpha (PVALB).